A 446-amino-acid polypeptide reads, in one-letter code: tRNA modification GTPase MnmE (446 aa).

(6S)-5-formyl-5,6,7,8-tetrahydrofolate is bound by residues arginine 22, glutamate 80, and lysine 119. Positions 215 to 370 constitute a TrmE-type G domain; it reads GLSLVIAGRP…LKKVIKQVVG (156 aa). Asparagine 225 is a binding site for K(+). Residues 225–230, 244–250, and 269–272 each bind GTP; these read NAGKST, TEIAGTT, and DTAG. Serine 229 is a Mg(2+) binding site. K(+) contacts are provided by threonine 244, isoleucine 246, and threonine 249. Threonine 250 is a binding site for Mg(2+). Lysine 446 contributes to the (6S)-5-formyl-5,6,7,8-tetrahydrofolate binding site.

This sequence belongs to the TRAFAC class TrmE-Era-EngA-EngB-Septin-like GTPase superfamily. TrmE GTPase family. In terms of assembly, homodimer. Heterotetramer of two MnmE and two MnmG subunits. Requires K(+) as cofactor.

It localises to the cytoplasm. In terms of biological role, exhibits a very high intrinsic GTPase hydrolysis rate. Involved in the addition of a carboxymethylaminomethyl (cmnm) group at the wobble position (U34) of certain tRNAs, forming tRNA-cmnm(5)s(2)U34. This is tRNA modification GTPase MnmE from Legionella pneumophila subsp. pneumophila (strain Philadelphia 1 / ATCC 33152 / DSM 7513).